The following is a 232-amino-acid chain: Orotate phosphoribosyltransferase (232 aa).

5-phospho-alpha-D-ribose 1-diphosphate-binding positions include Arg107, Lys108, Lys111, His113, and 133-141; that span reads EDLTTAGGS. Thr137 is a binding site for orotate.

Belongs to the purine/pyrimidine phosphoribosyltransferase family. PyrE subfamily. As to quaternary structure, homodimer. Mg(2+) serves as cofactor.

The catalysed reaction is orotidine 5'-phosphate + diphosphate = orotate + 5-phospho-alpha-D-ribose 1-diphosphate. It participates in pyrimidine metabolism; UMP biosynthesis via de novo pathway; UMP from orotate: step 1/2. Functionally, catalyzes the transfer of a ribosyl phosphate group from 5-phosphoribose 1-diphosphate to orotate, leading to the formation of orotidine monophosphate (OMP). The polypeptide is Orotate phosphoribosyltransferase (Rhizobium rhizogenes (strain K84 / ATCC BAA-868) (Agrobacterium radiobacter)).